The chain runs to 886 residues: Alanine--tRNA ligase (886 aa).

The Zn(2+) site is built by histidine 564, histidine 568, cysteine 676, and histidine 680.

Belongs to the class-II aminoacyl-tRNA synthetase family. It depends on Zn(2+) as a cofactor.

The protein resides in the cytoplasm. The catalysed reaction is tRNA(Ala) + L-alanine + ATP = L-alanyl-tRNA(Ala) + AMP + diphosphate. Catalyzes the attachment of alanine to tRNA(Ala) in a two-step reaction: alanine is first activated by ATP to form Ala-AMP and then transferred to the acceptor end of tRNA(Ala). Also edits incorrectly charged Ser-tRNA(Ala) and Gly-tRNA(Ala) via its editing domain. The polypeptide is Alanine--tRNA ligase (Bartonella bacilliformis).